We begin with the raw amino-acid sequence, 299 residues long: Methylsterol monooxygenase 1-2 (299 aa).

The next 3 membrane-spanning stretches (helical) occupy residues 39-59, 96-116, and 118-138; these read CHNI…LVFI, FILV…MIEI, and SGLP…YFLV. The Fatty acid hydroxylase domain maps to 132–267; that stretch reads LVVYFLVEDY…FTYCDYIYGT (136 aa). A Histidine box-1 motif is present at residues 147-151; sequence HRFFH. The Histidine box-2 signature appears at 160–164; it reads HHIHH. Residues 189–209 form a helical membrane-spanning segment; the sequence is TFLGPAIAPGHMITFWLWIAL. Residues 239-245 carry the Histidine box-3 motif; the sequence is YHDYHHY.

Belongs to the sterol desaturase family. In terms of assembly, interacts with ACBP1. It depends on Fe cation as a cofactor. As to expression, expressed in embryo sacs, pollen and trichomes. Observed in leaves, roots, siliques and flowers.

It is found in the endoplasmic reticulum membrane. It catalyses the reaction 4,4-dimethyl-5alpha-cholest-7-en-3beta-ol + 6 Fe(II)-[cytochrome b5] + 3 O2 + 5 H(+) = 4alpha-carboxy-4beta-methyl-5alpha-cholest-7-ene-3beta-ol + 6 Fe(III)-[cytochrome b5] + 4 H2O. The catalysed reaction is 24-methylenecycloartanol + 6 Fe(II)-[cytochrome b5] + 3 O2 + 5 H(+) = 4alpha-carboxy-4beta,14alpha-dimethyl-9beta,19-cyclo-5alpha-ergost-24(24(1))-en-3beta-ol + 6 Fe(III)-[cytochrome b5] + 4 H2O. Non-heme iron oxygenase involved in sterols biosynthesis by catalyzing the removal of the first methyl group at the C-4 position. 4,4-dimethyl-9-beta,19-cyclopropylsterols such as 24-methylenecycloartanol are the preferred substrates. Acts as a rate-limiting enzyme in the sterol pathway via interaction with ACBP1; sterols serve as lipid modulators for gene expression of homeodomain-leucine zipper IV transcription factors. Together with SMO1-1, involved in the maintenance of sterol composition to balance auxin and cytokinin activities during embryogenesis. In Arabidopsis thaliana (Mouse-ear cress), this protein is Methylsterol monooxygenase 1-2.